We begin with the raw amino-acid sequence, 254 residues long: Decaprenylphosphoryl-2-keto-beta-D-erythro-pentose reductase (254 aa).

Aspartate 67 is a binding site for NAD(+). Tyrosine 160 acts as the Proton acceptor in catalysis. Lysine 164 is an NAD(+) binding site.

Belongs to the short-chain dehydrogenases/reductases (SDR) family. Interacts with DprE1 to form an epimerase complex.

The protein resides in the periplasm. The catalysed reaction is trans,octa-cis-decaprenylphospho-beta-D-arabinofuranose + NAD(+) = trans,octa-cis-decaprenylphospho-beta-D-erythro-pentofuranosid-2-ulose + NADH + H(+). It functions in the pathway cell wall biogenesis; cell wall polysaccharide biosynthesis. Component of the DprE1-DprE2 complex that catalyzes the 2-step epimerization of decaprenyl-phospho-ribose (DPR) to decaprenyl-phospho-arabinose (DPA), a key precursor that serves as the arabinose donor required for the synthesis of cell-wall arabinans. DprE1 catalyzes the first step of epimerization, namely FAD-dependent oxidation of the C2' hydroxyl of DPR to yield the keto intermediate decaprenyl-phospho-2'-keto-D-arabinose (DPX). The intermediate DPX is then transferred to DprE2 subunit of the epimerase complex, most probably through a 'substrate channel' at the interface of DprE1-DprE2 complex. DprE2 then catalyzes the second step of epimerization, the NAD(+)-dependent reduction of DPX that leads to the formation of DPA. This Mycolicibacterium smegmatis (strain ATCC 700084 / mc(2)155) (Mycobacterium smegmatis) protein is Decaprenylphosphoryl-2-keto-beta-D-erythro-pentose reductase.